A 109-amino-acid chain; its full sequence is Ycf20-like protein (109 aa).

It belongs to the ycf20 family.

This Synechocystis sp. (strain ATCC 27184 / PCC 6803 / Kazusa) protein is Ycf20-like protein.